A 107-amino-acid polypeptide reads, in one-letter code: MGKIRKNDTVVVLSGDDKGKQGAVLELIPAKKAAIVKGVNIKTKHRKPSNKNTNGEIITFEAPILLSKLALVAKKATKDKPAIPTRVGFKIENKKKIRIAKKTGKAI.

It belongs to the universal ribosomal protein uL24 family. As to quaternary structure, part of the 50S ribosomal subunit.

Functionally, one of two assembly initiator proteins, it binds directly to the 5'-end of the 23S rRNA, where it nucleates assembly of the 50S subunit. One of the proteins that surrounds the polypeptide exit tunnel on the outside of the subunit. The sequence is that of Large ribosomal subunit protein uL24 from Mesomycoplasma hyopneumoniae (strain 7448) (Mycoplasma hyopneumoniae).